A 781-amino-acid polypeptide reads, in one-letter code: Dual specificity protein kinase zakA (781 aa).

Protein kinase domains are found at residues 9–317 (WEEI…HKLI) and 379–654 (DKDD…EIGL). ATP is bound by residues 15–23 (IGEGQYGRV) and lysine 44. The active-site Proton acceptor is aspartate 132. Residues 168–209 (ETTNNNNNPNNNNNNNNNNNNNNNNNNNNNNNNNNINNINNN) are disordered. Positions 171–209 (NNNNNPNNNNNNNNNNNNNNNNNNNNNNNNNNINNINNN) are enriched in low complexity. ATP-binding positions include 385-393 (GGAGNFGDV) and lysine 406. Residue aspartate 507 is the Proton acceptor of the active site.

The protein in the N-terminal section; belongs to the protein kinase superfamily. Ser/Thr protein kinase family. This sequence in the C-terminal section; belongs to the protein kinase superfamily. TKL Tyr protein kinase family. N-terminal serine/threonine domain is capable of autophosphorylation, in vitro, but to a lower extent than the tyrosine kinase domain. May function as a negative regulator of the tyrosine kinase domain. In terms of processing, C-terminal tyrosine kinase domain is capable of autophosphorylation, in vitro. In terms of tissue distribution, zakA and zak2 are coexpressed in prestalk cell population, zakA is enriched in pstB populations and zak1 in pstA populations. ZakA and zak2 are coexpressed in prespore cells, zakA expression levels are 10 fold higher than zak2.

It carries out the reaction L-seryl-[protein] + ATP = O-phospho-L-seryl-[protein] + ADP + H(+). The catalysed reaction is L-threonyl-[protein] + ATP = O-phospho-L-threonyl-[protein] + ADP + H(+). The enzyme catalyses L-tyrosyl-[protein] + ATP = O-phospho-L-tyrosyl-[protein] + ADP + H(+). Functionally, positive regulator of gsk3/gskA activity required for cell pattern formation and a downstream effector of carC. The kinases, gsk3/gskA, zakA and zak2, form part of a signaling pathway that responds to extracellular cyclic AMP. The pathway has a role in transcriptional regulation; required to direct prespore/spore fates during development. ZakA negatively regulates prestalk differentiation by regulating expression of ecmB. Phosphorylates Y-214 of gsk3/gskA, in vitro. This is Dual specificity protein kinase zakA (zakA) from Dictyostelium discoideum (Social amoeba).